The chain runs to 426 residues: Enolase (426 aa).

Gln-163 contributes to the (2R)-2-phosphoglycerate binding site. The Proton donor role is filled by Glu-205. Positions 242, 285, and 312 each coordinate Mg(2+). (2R)-2-phosphoglycerate contacts are provided by Lys-337, Arg-366, Ser-367, and Lys-388. The active-site Proton acceptor is the Lys-337.

It belongs to the enolase family. It depends on Mg(2+) as a cofactor.

It localises to the cytoplasm. It is found in the secreted. The protein resides in the cell surface. The enzyme catalyses (2R)-2-phosphoglycerate = phosphoenolpyruvate + H2O. It participates in carbohydrate degradation; glycolysis; pyruvate from D-glyceraldehyde 3-phosphate: step 4/5. In terms of biological role, catalyzes the reversible conversion of 2-phosphoglycerate (2-PG) into phosphoenolpyruvate (PEP). It is essential for the degradation of carbohydrates via glycolysis. In Rhodospirillum centenum (strain ATCC 51521 / SW), this protein is Enolase.